Reading from the N-terminus, the 243-residue chain is 1-(5-phosphoribosyl)-5-[(5-phosphoribosylamino)methylideneamino] imidazole-4-carboxamide isomerase (243 aa).

The Proton acceptor role is filled by Asp8. The active-site Proton donor is Asp130.

The protein belongs to the HisA/HisF family.

It is found in the cytoplasm. It catalyses the reaction 1-(5-phospho-beta-D-ribosyl)-5-[(5-phospho-beta-D-ribosylamino)methylideneamino]imidazole-4-carboxamide = 5-[(5-phospho-1-deoxy-D-ribulos-1-ylimino)methylamino]-1-(5-phospho-beta-D-ribosyl)imidazole-4-carboxamide. It participates in amino-acid biosynthesis; L-histidine biosynthesis; L-histidine from 5-phospho-alpha-D-ribose 1-diphosphate: step 4/9. The chain is 1-(5-phosphoribosyl)-5-[(5-phosphoribosylamino)methylideneamino] imidazole-4-carboxamide isomerase from Methylococcus capsulatus (strain ATCC 33009 / NCIMB 11132 / Bath).